Here is a 154-residue protein sequence, read N- to C-terminus: Myoglobin (154 aa).

One can recognise a Globin domain in the interval 2–148 (GLSDQEWQHV…FRNDMASKYK (147 aa)). His-65 is a nitrite binding site. His-65 lines the O2 pocket. His-94 provides a ligand contact to heme b.

Belongs to the globin family. As to quaternary structure, monomeric.

It localises to the cytoplasm. The protein resides in the sarcoplasm. The catalysed reaction is Fe(III)-heme b-[protein] + nitric oxide + H2O = Fe(II)-heme b-[protein] + nitrite + 2 H(+). It catalyses the reaction H2O2 + AH2 = A + 2 H2O. In terms of biological role, monomeric heme protein which primary function is to store oxygen and facilitate its diffusion within muscle tissues. Reversibly binds oxygen through a pentacoordinated heme iron and enables its timely and efficient release as needed during periods of heightened demand. Depending on the oxidative conditions of tissues and cells, and in addition to its ability to bind oxygen, it also has a nitrite reductase activity whereby it regulates the production of bioactive nitric oxide. Under stress conditions, like hypoxia and anoxia, it also protects cells against reactive oxygen species thanks to its pseudoperoxidase activity. The sequence is that of Myoglobin (MB) from Uria lomvia (Thick-billed murre).